A 330-amino-acid polypeptide reads, in one-letter code: G-protein coupled receptor 157 (330 aa).

Residues 1–15 (MPSPAPPTELLPWER) are Extracellular-facing. A helical transmembrane segment spans residues 16-36 (AVVLLSCALSALGSGLLVATH). Over 37 to 48 (ALWPDLRSRARR) the chain is Cytoplasmic. The chain crosses the membrane as a helical span at residues 49-69 (LLLFLSLADLLSAASYFYGVL). At 70 to 87 (QDFAGTSWDCVLQGALST) the chain is on the extracellular side. A helical membrane pass occupies residues 88–108 (FANTSSFFWTVAIALYLYLSI). The Cytoplasmic portion of the chain corresponds to 109-119 (VRTTRGPSTDH). The helical transmembrane segment at 120–140 (LIWAFHLISWGVPLAITVAAV) threads the bilayer. Residues 141 to 166 (SLKKIGYDASDVSVGWCWINLEAEDR) lie on the Extracellular side of the membrane. The helical transmembrane segment at 167–187 (VLWMLLTGKLWEMLAYILLPL) threads the bilayer. Residues 188–227 (LYLLVRKHINRAHQALSEYRPICEGRQLQRGSSTSTADKK) are Cytoplasmic-facing. Residues 228–248 (LVLIPLIFICLRVWSTVRFVL) traverse the membrane as a helical segment. The Extracellular portion of the chain corresponds to 249–259 (TLCGSPAVQTP). Residues 260–280 (VLVVLHGIGNTFQGGANCIMF) traverse the membrane as a helical segment. Over 281-330 (VLCTRAVRTRLFSLCCCCPRPSTQSPPGAPTPPKIGESQESRRTPEVPST) the chain is Cytoplasmic. The interval 301 to 330 (PSTQSPPGAPTPPKIGESQESRRTPEVPST) is disordered. Positions 317–330 (ESQESRRTPEVPST) are enriched in basic and acidic residues.

Belongs to the G-protein coupled receptor 2 family. In terms of tissue distribution, expressed in the primary cilia of radial glial progenitors (RGPs) in the developing neocortex.

The protein resides in the cell projection. The protein localises to the cilium membrane. In terms of biological role, orphan receptor that promotes neuronal differentiation of radial glial progenitors (RGPs). The activity of this receptor is mediated by a G(q)-protein that activates a phosphatidylinositol-calcium second messenger. In Mus musculus (Mouse), this protein is G-protein coupled receptor 157 (Gpr157).